Reading from the N-terminus, the 561-residue chain is Putative pectinesterase/pectinesterase inhibitor 24 (561 aa).

Residues Ile26–Gly46 traverse the membrane as a helical segment. Residues Asp64–Ile211 are pectinesterase inhibitor 24. Asn92, Asn130, Asn148, and Asn200 each carry an N-linked (GlcNAc...) asparagine glycan. The tract at residues Asp255 to Arg548 is pectinesterase 24. Thr330 and Gln360 together coordinate substrate. Asp383 functions as the Proton donor; for pectinesterase activity in the catalytic mechanism. Cysteines 397 and 417 form a disulfide. Asp404 acts as the Nucleophile; for pectinesterase activity in catalysis. Positions 468 and 470 each coordinate substrate. Asn472 carries N-linked (GlcNAc...) asparagine glycosylation.

The protein in the N-terminal section; belongs to the PMEI family. In the C-terminal section; belongs to the pectinesterase family.

Its subcellular location is the membrane. It catalyses the reaction [(1-&gt;4)-alpha-D-galacturonosyl methyl ester](n) + n H2O = [(1-&gt;4)-alpha-D-galacturonosyl](n) + n methanol + n H(+). It participates in glycan metabolism; pectin degradation; 2-dehydro-3-deoxy-D-gluconate from pectin: step 1/5. In terms of biological role, acts in the modification of cell walls via demethylesterification of cell wall pectin. The chain is Putative pectinesterase/pectinesterase inhibitor 24 (PME24) from Arabidopsis thaliana (Mouse-ear cress).